A 122-amino-acid chain; its full sequence is MIQMQTLLDVADNSGAKKLFCIKVLGGSKRRYAGIGDIIVASVKEALPNSKVKKGDVVKAVVVRTAKAVGRPDGSYIRFDTNSGVVINNAKEPVGTRIFGPVARELRAKKFMKIISLAPEVL.

Belongs to the universal ribosomal protein uL14 family. As to quaternary structure, part of the 50S ribosomal subunit. Forms a cluster with proteins L3 and L19. In the 70S ribosome, L14 and L19 interact and together make contacts with the 16S rRNA in bridges B5 and B8.

Functionally, binds to 23S rRNA. Forms part of two intersubunit bridges in the 70S ribosome. This chain is Large ribosomal subunit protein uL14, found in Citrifermentans bemidjiense (strain ATCC BAA-1014 / DSM 16622 / JCM 12645 / Bem) (Geobacter bemidjiensis).